The chain runs to 990 residues: Type III restriction-modification enzyme StyLTI Res subunit (990 aa).

The segment at asparagine 50 to glycine 545 is helicase-like domain. Residues leucine 884–glutamate 970 form the VRR-NUC domain. The endonuclease domain stretch occupies residues serine 913–lysine 937.

Belongs to the type III restriction-modification system Res protein family. Contains two different subunits: Res and Mod. The cofactor is Mg(2+). S-adenosyl-L-methionine is required as a cofactor.

It catalyses the reaction Endonucleolytic cleavage of DNA to give specific double-stranded fragments with terminal 5'-phosphates.. Functionally, a type III restriction enzyme that recognizes 2 inversely oriented double-stranded sequences 5'-CAGAG-3' and cleaves DNA 25-27 base pairs downstream. After binding to one recognition site undergoes random one-dimensional diffusion along DNA until it collides with a stationary enzyme bound to the second DNA site, which is when DNA cleavage occurs. DNA restriction requires both the Res and Mod subunits. In Salmonella typhimurium (strain LT2 / SGSC1412 / ATCC 700720), this protein is Type III restriction-modification enzyme StyLTI Res subunit.